We begin with the raw amino-acid sequence, 494 residues long: Cytochrome P450 2A8 (494 aa).

Position 439 (cysteine 439) interacts with heme.

The protein belongs to the cytochrome P450 family. Heme is required as a cofactor. In terms of tissue distribution, liver.

Its subcellular location is the endoplasmic reticulum membrane. The protein resides in the microsome membrane. The enzyme catalyses an organic molecule + reduced [NADPH--hemoprotein reductase] + O2 = an alcohol + oxidized [NADPH--hemoprotein reductase] + H2O + H(+). In terms of biological role, highly active in 7-ethoxycoumarin O-deethylation, and benzphetamine N-demethylation; moderately active in testosterone 7-alpha-hydroxylation, ethylmorphine N-demethylation, p-nitroanisole O-demethylation; and only slightly active in benzopyrene 3-hydroxylation, 7-ethoxyresorufin O-deethylation, testosterone 2-alpha-hydroxylation and testosterone 17-oxidation. Competent in the metabolic activation of aflatoxin B1. The chain is Cytochrome P450 2A8 (CYP2A8) from Mesocricetus auratus (Golden hamster).